We begin with the raw amino-acid sequence, 489 residues long: MIPPHEFSAERVVFDALGVALSALPDDTPIAIAYSGGLDSTVLLHAAARIAGAGRCIALHVHHGLSANADAWLAHCAETAQALGARFDAARVDVPRASGQGIEASARDARYRALETMCARYGARTLWLAQHADDQAETVLLQLLRGAGIAGLAAMAPQYRPALADVVRMRPLLHLLRAQLERYAQQHALRWIDDESNTDTRYARNALRVDVLPALAPHFPGFRDALARTAQHAAAAQRLLDDLAAIDLRAVARADVRVLSRDAFVALDDERGANLLRYWMRSLGLPGASAARLAEMVKQLRAARDAHALRVDHAGWRLRLYRDDVQWEAGDGAASEAARADVADDDAADARDDRADASAAARLPACALAWRGHEVWRLPGWRGSFVFSPVAAHEHDAVPEALLSSAALRACARAGGERMRTWQGGPGRTLKNLFQERGVPAWQRDVPLLYVGERLLFVPRIGVNRATHDGADAPGGWRRIEWRPDMLIA.

Residue 35 to 40 (SGGLDS) coordinates ATP.

The protein belongs to the tRNA(Ile)-lysidine synthase family.

The protein localises to the cytoplasm. It catalyses the reaction cytidine(34) in tRNA(Ile2) + L-lysine + ATP = lysidine(34) in tRNA(Ile2) + AMP + diphosphate + H(+). Functionally, ligates lysine onto the cytidine present at position 34 of the AUA codon-specific tRNA(Ile) that contains the anticodon CAU, in an ATP-dependent manner. Cytidine is converted to lysidine, thus changing the amino acid specificity of the tRNA from methionine to isoleucine. In Burkholderia mallei (strain ATCC 23344), this protein is tRNA(Ile)-lysidine synthase.